We begin with the raw amino-acid sequence, 214 residues long: Adenylate kinase (214 aa).

10–15 (GAGKGT) serves as a coordination point for ATP. The segment at 30 to 59 (STGDMLRAAIKAGTELGKQAKSVIDAGQLV) is NMP. Residues Thr-31, Arg-36, 57-59 (QLV), 85-88 (GFPR), and Gln-92 each bind AMP. Residues 122 to 159 (GRRAHLPSGRTYHNVYNPPKEEGKDDITGEELVVRDDD) are LID. Residues Arg-123 and 132 to 133 (TY) each bind ATP. AMP is bound by residues Arg-156 and Arg-167. Lys-200 contributes to the ATP binding site.

It belongs to the adenylate kinase family. In terms of assembly, monomer.

It localises to the cytoplasm. The enzyme catalyses AMP + ATP = 2 ADP. Its pathway is purine metabolism; AMP biosynthesis via salvage pathway; AMP from ADP: step 1/1. In terms of biological role, catalyzes the reversible transfer of the terminal phosphate group between ATP and AMP. Plays an important role in cellular energy homeostasis and in adenine nucleotide metabolism. The sequence is that of Adenylate kinase from Vibrio atlanticus (strain LGP32) (Vibrio splendidus (strain Mel32)).